The sequence spans 1057 residues: Nuclear RNAi defective-3 protein (1057 aa).

Disordered regions lie at residues 1–89 (MDLL…GLSV) and 344–388 (LTNS…ERTV). Residues 17–30 (STAKKPATSASSTP) show a composition bias toward low complexity. Composition is skewed to basic and acidic residues over residues 67-81 (PKRE…DPKR) and 356-388 (GGRE…ERTV). The PAZ domain maps to 387–500 (TVSHYQRQFQ…YPMELMSILP (114 aa)). The Piwi domain occupies 677 to 1001 (GIIAEKRPDM…LAKRGHNNYK (325 aa)).

Its subcellular location is the cytoplasm. It is found in the nucleus. Transports small interfering RNAs (siRNAs) from the cytoplasm to the nucleus. Required for RNA interference (RNAi) in nuclei. Required for exogenous RNAi-induced H3K27 methylation. The protein is Nuclear RNAi defective-3 protein (nrde-3) of Caenorhabditis elegans.